The primary structure comprises 387 residues: UDP-N-acetylglucosamine--N-acetylmuramyl-(pentapeptide) pyrophosphoryl-undecaprenol N-acetylglucosamine transferase (387 aa).

The interval 1–22 is disordered; that stretch reads MSEHVRSAGPPQASTAPSGGSA. UDP-N-acetyl-alpha-D-glucosamine is bound by residues 41 to 43, N158, R194, S222, I276, and Q321; that span reads TGG.

Belongs to the glycosyltransferase 28 family. MurG subfamily.

Its subcellular location is the cell inner membrane. The enzyme catalyses di-trans,octa-cis-undecaprenyl diphospho-N-acetyl-alpha-D-muramoyl-L-alanyl-D-glutamyl-meso-2,6-diaminopimeloyl-D-alanyl-D-alanine + UDP-N-acetyl-alpha-D-glucosamine = di-trans,octa-cis-undecaprenyl diphospho-[N-acetyl-alpha-D-glucosaminyl-(1-&gt;4)]-N-acetyl-alpha-D-muramoyl-L-alanyl-D-glutamyl-meso-2,6-diaminopimeloyl-D-alanyl-D-alanine + UDP + H(+). Its pathway is cell wall biogenesis; peptidoglycan biosynthesis. Cell wall formation. Catalyzes the transfer of a GlcNAc subunit on undecaprenyl-pyrophosphoryl-MurNAc-pentapeptide (lipid intermediate I) to form undecaprenyl-pyrophosphoryl-MurNAc-(pentapeptide)GlcNAc (lipid intermediate II). This chain is UDP-N-acetylglucosamine--N-acetylmuramyl-(pentapeptide) pyrophosphoryl-undecaprenol N-acetylglucosamine transferase, found in Polaromonas sp. (strain JS666 / ATCC BAA-500).